The sequence spans 394 residues: Myb-like protein R (394 aa).

Helical transmembrane passes span 11–31 and 99–119; these read IGAQ…EFII and FFIG…LIIF. Positions 325-377 constitute a Myb-like domain; it reads GNWSLDEQKALMVEVSTLGNKSEINWFFISKQLFLKGISRNARECQRKHESIQ.

Its subcellular location is the membrane. The protein is Myb-like protein R (mybR) of Dictyostelium discoideum (Social amoeba).